We begin with the raw amino-acid sequence, 410 residues long: 2-oxoglutarate-dependent dioxygenase AOP3 (410 aa).

The region spanning 258-355 is the Fe2OG dioxygenase domain; the sequence is GNASVGAKEA…RYAAALFSYP (98 aa). His278, Asp280, and His335 together coordinate Fe cation. Arg346 provides a ligand contact to 2-oxoglutarate.

Belongs to the iron/ascorbate-dependent oxidoreductase family. Fe(2+) serves as cofactor.

Its function is as follows. 2-oxoglutarate-dependent dioxygenase involved in glucosinolates biosynthesis. Catalyzes the conversion of methylsulfinylalkyl glucosinolates to hydroxyalkyl glucosinolates. This chain is 2-oxoglutarate-dependent dioxygenase AOP3 (AOP3), found in Arabidopsis thaliana (Mouse-ear cress).